The chain runs to 308 residues: MSNSPESSTPKQSIPARFPKWLRQKLPLGKVFSRTDGTIKNKGLPTVCEEASCPNRTHCWSRHTATYLALGDACTRRCGFCDIDFTKKPLPPDPQEGEKIAASAKALGLKHIVITMVSRDDLEDGGADALARIITTLHIELPEATIEVLASDFEGNIDALHHLLDARIAIYNHNVETVERLSPLVRHKATYRRSLMMLEQAAQYLPDLMIKSGIMVGLGEQESEIKQTLKDLADHGVKIVTIGQYLRPSRRHIPVKSYVSPETFDYYRSVGEALGLFIYAGPFVRSSFNADAVFEAMSQRERLSASIQ.

The [4Fe-4S] cluster site is built by C48, C53, C59, C74, C78, C81, and S287. A Radical SAM core domain is found at 60–277 (WSRHTATYLA…RSVGEALGLF (218 aa)).

The protein belongs to the radical SAM superfamily. Lipoyl synthase family. The cofactor is [4Fe-4S] cluster.

The protein resides in the cytoplasm. It catalyses the reaction [[Fe-S] cluster scaffold protein carrying a second [4Fe-4S](2+) cluster] + N(6)-octanoyl-L-lysyl-[protein] + 2 oxidized [2Fe-2S]-[ferredoxin] + 2 S-adenosyl-L-methionine + 4 H(+) = [[Fe-S] cluster scaffold protein] + N(6)-[(R)-dihydrolipoyl]-L-lysyl-[protein] + 4 Fe(3+) + 2 hydrogen sulfide + 2 5'-deoxyadenosine + 2 L-methionine + 2 reduced [2Fe-2S]-[ferredoxin]. It participates in protein modification; protein lipoylation via endogenous pathway; protein N(6)-(lipoyl)lysine from octanoyl-[acyl-carrier-protein]: step 2/2. Functionally, catalyzes the radical-mediated insertion of two sulfur atoms into the C-6 and C-8 positions of the octanoyl moiety bound to the lipoyl domains of lipoate-dependent enzymes, thereby converting the octanoylated domains into lipoylated derivatives. The polypeptide is Lipoyl synthase (Chlamydia muridarum (strain MoPn / Nigg)).